Consider the following 637-residue polypeptide: Extracellular metalloproteinase 10 (637 aa).

Residues 1–19 (MHGLLLAATLLSLPFNAVA) form the signal peptide. The propeptide occupies 20–245 (HVPPTTGLVR…VHNVVDYVAH (226 aa)). Asn-282 carries N-linked (GlcNAc...) asparagine glycosylation. Residue His-429 coordinates Zn(2+). Residue Glu-430 is part of the active site. A Zn(2+)-binding site is contributed by His-433. A glycan (N-linked (GlcNAc...) asparagine) is linked at Asn-502.

It belongs to the peptidase M36 family. Requires Zn(2+) as cofactor.

The protein resides in the secreted. In terms of biological role, secreted metalloproteinase that allows assimilation of proteinaceous substrates. This chain is Extracellular metalloproteinase 10 (MEP10), found in Uncinocarpus reesii (strain UAMH 1704).